Reading from the N-terminus, the 564-residue chain is Asparagine synthetase domain-containing protein CG17486 (564 aa).

Cys-2 acts as the Nucleophile in catalysis. The Glutamine amidotransferase type-2 domain occupies 2–180 (CGIFCSVVNN…PLGLFRVKLN (179 aa)). Residues 280–541 (PFCRLCMQKL…GLRDVVFLKK (262 aa)) enclose the Asparagine synthetase domain.

The chain is Asparagine synthetase domain-containing protein CG17486 from Drosophila melanogaster (Fruit fly).